The primary structure comprises 901 residues: HTH-type transcriptional regulator MalT (901 aa).

Position 39 to 46 (39 to 46) interacts with ATP; that stretch reads SPAGYGKT. Residues 829-894 form the HTH luxR-type domain; it reads ELIRTSPLTQ…AAVQHAQKLL (66 aa). The H-T-H motif DNA-binding region spans 853–872; sequence NEQIAGELEVAATTIKTHIR.

Belongs to the MalT family. In terms of assembly, monomer in solution. Oligomerizes to an active state in the presence of the positive effectors ATP and maltotriose.

With respect to regulation, activated by ATP and maltotriose, which are both required for DNA binding. In terms of biological role, positively regulates the transcription of the maltose regulon whose gene products are responsible for uptake and catabolism of malto-oligosaccharides. Specifically binds to the promoter region of its target genes, recognizing a short DNA motif called the MalT box. The polypeptide is HTH-type transcriptional regulator MalT (Escherichia coli O45:K1 (strain S88 / ExPEC)).